The chain runs to 259 residues: 5'-nucleotidase SurE (259 aa).

Aspartate 8, aspartate 9, serine 40, and asparagine 92 together coordinate a divalent metal cation.

It belongs to the SurE nucleotidase family. A divalent metal cation is required as a cofactor.

The protein localises to the cytoplasm. The catalysed reaction is a ribonucleoside 5'-phosphate + H2O = a ribonucleoside + phosphate. Nucleotidase that shows phosphatase activity on nucleoside 5'-monophosphates. The protein is 5'-nucleotidase SurE of Stenotrophomonas maltophilia (strain R551-3).